The following is a 375-amino-acid chain: tRNA-specific 2-thiouridylase MnmA (375 aa).

ATP-binding positions include 20-27 and Leu-46; that span reads AMSGGVDS. The active-site Nucleophile is Cys-114. A disulfide bridge links Cys-114 with Cys-211. ATP is bound at residue Gly-138. The interaction with tRNA stretch occupies residues 160-162; that stretch reads RDQ. Cys-211 (cysteine persulfide intermediate) is an active-site residue.

This sequence belongs to the MnmA/TRMU family.

It is found in the cytoplasm. The enzyme catalyses S-sulfanyl-L-cysteinyl-[protein] + uridine(34) in tRNA + AH2 + ATP = 2-thiouridine(34) in tRNA + L-cysteinyl-[protein] + A + AMP + diphosphate + H(+). Functionally, catalyzes the 2-thiolation of uridine at the wobble position (U34) of tRNA, leading to the formation of s(2)U34. This is tRNA-specific 2-thiouridylase MnmA from Ruegeria pomeroyi (strain ATCC 700808 / DSM 15171 / DSS-3) (Silicibacter pomeroyi).